Reading from the N-terminus, the 111-residue chain is MMKGGMAGLMKQAQQMQEKMAKMQEELANAEVTGQSGGGLVSVVMTGRHDVKRVSIDQSLMSTEEDDKEVLEDLIAAALNDAVRKVEQSSQEKMGGMTAGMQLPPGFKMPF.

A disordered region spans residues 87 to 111 (EQSSQEKMGGMTAGMQLPPGFKMPF).

Belongs to the YbaB/EbfC family. In terms of assembly, homodimer.

Its subcellular location is the cytoplasm. The protein resides in the nucleoid. Binds to DNA and alters its conformation. May be involved in regulation of gene expression, nucleoid organization and DNA protection. The protein is Nucleoid-associated protein PputW619_3586 of Pseudomonas putida (strain W619).